A 225-amino-acid polypeptide reads, in one-letter code: Deoxyribose-phosphate aldolase (225 aa).

Aspartate 94 (proton donor/acceptor) is an active-site residue. The active-site Schiff-base intermediate with acetaldehyde is lysine 158. The Proton donor/acceptor role is filled by lysine 187.

The protein belongs to the DeoC/FbaB aldolase family. DeoC type 1 subfamily.

The protein localises to the cytoplasm. The enzyme catalyses 2-deoxy-D-ribose 5-phosphate = D-glyceraldehyde 3-phosphate + acetaldehyde. It functions in the pathway carbohydrate degradation; 2-deoxy-D-ribose 1-phosphate degradation; D-glyceraldehyde 3-phosphate and acetaldehyde from 2-deoxy-alpha-D-ribose 1-phosphate: step 2/2. Functionally, catalyzes a reversible aldol reaction between acetaldehyde and D-glyceraldehyde 3-phosphate to generate 2-deoxy-D-ribose 5-phosphate. The sequence is that of Deoxyribose-phosphate aldolase from Thermococcus gammatolerans (strain DSM 15229 / JCM 11827 / EJ3).